The chain runs to 58 residues: uncharacterized protein (58 aa).

A run of 2 helical transmembrane segments spans residues 7 to 27 and 29 to 49; these read IFDIVMYIIFGVLSLFLVAKT and YGTGVLVFVAILYLAVIAYKI.

It localises to the cell membrane. This is an uncharacterized protein from Bacillus subtilis (strain 168).